The chain runs to 164 residues: Large ribosomal subunit protein uL15 (164 aa).

The disordered stretch occupies residues 1–52 (MSLSKLKAPKGANRERTRVGRGQGSGLGKTAGRGGKGQKARSGNMHFEGFEG). Over residues 21-37 (RGQGSGLGKTAGRGGKG) the composition is skewed to gly residues.

It belongs to the universal ribosomal protein uL15 family. As to quaternary structure, part of the 50S ribosomal subunit.

Its function is as follows. Binds to the 23S rRNA. This chain is Large ribosomal subunit protein uL15, found in Anaeromyxobacter sp. (strain Fw109-5).